The chain runs to 220 residues: Adenylate kinase (220 aa).

Gly10–Thr15 contacts ATP. Positions Ser30–Ile59 are NMP. AMP is bound by residues Ser31, Arg36, Asp57 to Ile59, Gly83 to Arg86, and Gln90. Residues Gly124–Asp161 are LID. Arg125 serves as a coordination point for ATP. 2 residues coordinate Zn(2+): Cys128 and Cys131. Position 134–135 (Val134–Tyr135) interacts with ATP. Zn(2+) is bound by residues Cys148 and Cys151. Positions 158 and 169 each coordinate AMP. Gly197 provides a ligand contact to ATP.

It belongs to the adenylate kinase family. As to quaternary structure, monomer.

It localises to the cytoplasm. It carries out the reaction AMP + ATP = 2 ADP. The protein operates within purine metabolism; AMP biosynthesis via salvage pathway; AMP from ADP: step 1/1. Its function is as follows. Catalyzes the reversible transfer of the terminal phosphate group between ATP and AMP. Plays an important role in cellular energy homeostasis and in adenine nucleotide metabolism. This chain is Adenylate kinase, found in Pyrococcus horikoshii (strain ATCC 700860 / DSM 12428 / JCM 9974 / NBRC 100139 / OT-3).